Reading from the N-terminus, the 213-residue chain is 3,4-dihydroxy-2-butanone 4-phosphate synthase (213 aa).

Residues 37 to 38 (RE), Asp-42, 150 to 154 (RPGHT), and Glu-174 each bind D-ribulose 5-phosphate. Residue Glu-38 coordinates Mg(2+). His-153 serves as a coordination point for Mg(2+).

This sequence belongs to the DHBP synthase family. In terms of assembly, homodimer. It depends on Mg(2+) as a cofactor. Mn(2+) is required as a cofactor.

The catalysed reaction is D-ribulose 5-phosphate = (2S)-2-hydroxy-3-oxobutyl phosphate + formate + H(+). Its pathway is cofactor biosynthesis; riboflavin biosynthesis; 2-hydroxy-3-oxobutyl phosphate from D-ribulose 5-phosphate: step 1/1. Catalyzes the conversion of D-ribulose 5-phosphate to formate and 3,4-dihydroxy-2-butanone 4-phosphate. This is 3,4-dihydroxy-2-butanone 4-phosphate synthase from Clostridium botulinum (strain Langeland / NCTC 10281 / Type F).